Reading from the N-terminus, the 266-residue chain is Type II iodothyronine deiodinase (266 aa).

Topologically, residues M1–Q13 are lumenal. The chain crosses the membrane as a helical; Signal-anchor for type III membrane protein span at residues I14–V34. At K35–R266 the chain is on the cytoplasmic side. The active site involves U134. A non-standard amino acid (selenocysteine) is located at residue U134.

It belongs to the iodothyronine deiodinase family. Predominantly monomer. Can form homodimers but homodimerization is not essential for enzyme activity.

The protein localises to the endoplasmic reticulum membrane. The enzyme catalyses 3,3',5-triiodo-L-thyronine + iodide + A + H(+) = L-thyroxine + AH2. It catalyses the reaction 3,3'-diiodo-L-thyronine + iodide + A + H(+) = 3,3',5'-triiodo-L-thyronine + AH2. The catalysed reaction is 3'-iodo-L-thyronine + iodide + A + H(+) = 3',5'-diiodo-L-thyronine + AH2. Not inhibited by N(6)-propylthiouracil. In terms of biological role, plays a crucial role in the metabolism of thyroid hormones (TH) and has specific roles in TH activation and inactivation by deiodination. Catalyzes the conversion of T4 (L-thyroxine/3,5,3',5'-tetraiodothyronine) to T3 (3,5,3'-triiodothyronine) and rT3 (3,3',5'-triiodothyronine) to T2 (3,3'-diiodothyronine) via outer-ring deiodination (ORD). Catalyzes the conversion 3',5'-T2 (3,5-diiodothyronine) to 3-T1 (3-monoiodothyronine) via ORD. This chain is Type II iodothyronine deiodinase (dio2), found in Fundulus heteroclitus (Killifish).